The chain runs to 62 residues: Large ribosomal subunit protein eL24 (62 aa).

Residues cysteine 7, cysteine 10, cysteine 33, and cysteine 37 each coordinate Zn(2+). Residues 7–37 form a C4-type zinc finger; that stretch reads CSFCGREIEPGTGIMYVKNDGSILWFCSRKC.

The protein belongs to the eukaryotic ribosomal protein eL24 family. In terms of assembly, part of the 50S ribosomal subunit. Forms a cluster with proteins L3 and L14. Zn(2+) is required as a cofactor.

Binds to the 23S rRNA. The chain is Large ribosomal subunit protein eL24 from Staphylothermus marinus (strain ATCC 43588 / DSM 3639 / JCM 9404 / F1).